Consider the following 425-residue polypeptide: Histone-binding protein RBBP4-A (425 aa).

Residue Ala-2 is modified to N-acetylalanine. WD repeat units lie at residues 32–125 (YDLV…THDG), 126–175 (EVNR…RLRG), 176–223 (HQKE…KTIF), 225–270 (GHTA…HSVD), 271–314 (AHTA…HSFE), 315–371 (SHKD…FIHG), and 372–404 (GHTA…VWQM).

Belongs to the WD repeat RBAP46/RBAP48/MSI1 family. Binds directly to histone H4, probably via helix 1 of the histone fold, a region that is not accessible when histone H4 is in chromatin. Probably forms a large corepressor complex that contains ncor1, sin3a, hdac1-A and/or hdac1-B, hdac2, rbbp4-A and/or rbbp4-B and possibly rbbp7.

The protein resides in the nucleus. Its subcellular location is the chromosome. The protein localises to the telomere. In terms of biological role, core histone-binding subunit that may target chromatin assembly factors, chromatin remodeling factors and histone deacetylases to their histone substrates in a manner that is regulated by nucleosomal DNA. Component of several complexes which regulate chromatin metabolism. This chain is Histone-binding protein RBBP4-A (rbbp4-a), found in Xenopus laevis (African clawed frog).